The sequence spans 364 residues: Fructose-bisphosphate aldolase B (364 aa).

Substrate contacts are provided by Arg-56 and Lys-147. Catalysis depends on Glu-188, which acts as the Proton acceptor. Lys-230 serves as the catalytic Schiff-base intermediate with dihydroxyacetone-P.

This sequence belongs to the class I fructose-bisphosphate aldolase family. As to quaternary structure, homotetramer.

The protein localises to the cytoplasm. It is found in the cytoskeleton. Its subcellular location is the microtubule organizing center. The protein resides in the centrosome. It localises to the centriolar satellite. The enzyme catalyses beta-D-fructose 1,6-bisphosphate = D-glyceraldehyde 3-phosphate + dihydroxyacetone phosphate. Its pathway is carbohydrate degradation; glycolysis; D-glyceraldehyde 3-phosphate and glycerone phosphate from D-glucose: step 4/4. The chain is Fructose-bisphosphate aldolase B (ALDOB) from Gallus gallus (Chicken).